The following is a 279-amino-acid chain: Tryptophan prenyltransferase ComQ (279 aa).

Positions 67 and 71 each coordinate Mg(2+).

It belongs to the FPP/GGPP synthase family. The cofactor is Mg(2+).

The protein resides in the cell membrane. The enzyme catalyses L-tryptophyl-[protein] + (2E)-geranyl diphosphate = (2S,3R)-3-geranyl-2,3-dihydro-2,N(alpha)-cyclo-L-tryptophyl-[protein] + diphosphate. Part of a major quorum-sensing system that regulates the development of genetic competence. Involved in the maturation of the competence pheromone ComX. Acts by catalyzing the transfer of a geranyl group on the ComX pheromone. Cannot use farnesyl diphosphate (FPP). The chain is Tryptophan prenyltransferase ComQ from Bacillus spizizenii (Bacillus subtilis subsp. spizizenii).